The following is an 845-amino-acid chain: Translation initiation factor IF-2 (845 aa).

The segment at 1–260 is disordered; sequence MSDEQDKPTL…HMTSSGPREK (260 aa). Over residues 68-81 the composition is skewed to pro residues; sequence APAPAPAAPRPAAP. Residues 101–140 are compositionally biased toward basic and acidic residues; that stretch reads REAEEARMAALEENRRREEAERARAAEEERARAEKREEQA. Composition is skewed to low complexity over residues 141 to 166 and 173 to 191; these read ATKA…APPA and TAAR…RFTP. Residues 194 to 215 show a composition bias toward basic and acidic residues; the sequence is ALKRPEPKRPEPKASRGGENRR. A tr-type G domain is found at 344–514; the sequence is PRAPVVTIMG…ALQAEIMELK (171 aa). Positions 353-360 are G1; the sequence is GHVDHGKT. 353–360 contributes to the GTP binding site; that stretch reads GHVDHGKT. Residues 378 to 382 are G2; it reads GITQH. Residues 400–403 are G3; the sequence is DTPG. GTP is bound by residues 400-404 and 454-457; these read DTPGH and NKVD. The tract at residues 454-457 is G4; sequence NKVD. The interval 490-492 is G5; the sequence is SAL.

It belongs to the TRAFAC class translation factor GTPase superfamily. Classic translation factor GTPase family. IF-2 subfamily.

Its subcellular location is the cytoplasm. Its function is as follows. One of the essential components for the initiation of protein synthesis. Protects formylmethionyl-tRNA from spontaneous hydrolysis and promotes its binding to the 30S ribosomal subunits. Also involved in the hydrolysis of GTP during the formation of the 70S ribosomal complex. This is Translation initiation factor IF-2 from Sphingopyxis alaskensis (strain DSM 13593 / LMG 18877 / RB2256) (Sphingomonas alaskensis).